A 420-amino-acid chain; its full sequence is UDP-N-acetylglucosamine 1-carboxyvinyltransferase (420 aa).

22-23 is a binding site for phosphoenolpyruvate; the sequence is KN. Residue Arg93 coordinates UDP-N-acetyl-alpha-D-glucosamine. Cys117 serves as the catalytic Proton donor. Cys117 bears the 2-(S-cysteinyl)pyruvic acid O-phosphothioketal mark. 2 residues coordinate UDP-N-acetyl-alpha-D-glucosamine: Asp307 and Val329.

The protein belongs to the EPSP synthase family. MurA subfamily.

It is found in the cytoplasm. The catalysed reaction is phosphoenolpyruvate + UDP-N-acetyl-alpha-D-glucosamine = UDP-N-acetyl-3-O-(1-carboxyvinyl)-alpha-D-glucosamine + phosphate. Its pathway is cell wall biogenesis; peptidoglycan biosynthesis. Its function is as follows. Cell wall formation. Adds enolpyruvyl to UDP-N-acetylglucosamine. The polypeptide is UDP-N-acetylglucosamine 1-carboxyvinyltransferase (Marinobacter nauticus (strain ATCC 700491 / DSM 11845 / VT8) (Marinobacter aquaeolei)).